Consider the following 308-residue polypeptide: MNQRSARSVLSRSGVVLVDKPSGPTSHDMVAKLRRIMGTRRIGHSGTLDPMATGLLVVGVERGTKFLAHVVTHDKRYEATVRLGVATHTDDAQGDVLSTASPQDLQALTEQQVREAFAAQRGDIMQRPTSVSSIKIDGKRAHELVREGHDVVLPERPVTIFSLEVLDVVVDDATSCIDARISVHCSSGTYIRAIARDVGEALGVGGHLTQLRRTSVGPFDVSEARTLEQLEEDPSLTLNLDEAMVRCFDTREISESEGVDLSLGKWLKPVGNKGVRAAVTPSGQAIALVEEKGKRASSVFVARPAGMD.

Asp49 serves as the catalytic Nucleophile.

Belongs to the pseudouridine synthase TruB family. Type 1 subfamily.

The enzyme catalyses uridine(55) in tRNA = pseudouridine(55) in tRNA. Its function is as follows. Responsible for synthesis of pseudouridine from uracil-55 in the psi GC loop of transfer RNAs. The polypeptide is tRNA pseudouridine synthase B (Corynebacterium jeikeium (strain K411)).